The sequence spans 520 residues: Leucine carboxyl methyltransferase 1 (520 aa).

2 disordered regions span residues 1-116 (MQRD…DDAV) and 142-174 (TQEF…SIRR). Over residues 79–89 (PSLRLSLGLPR) the composition is skewed to low complexity. 2 stretches are compositionally biased toward polar residues: residues 95 to 110 (HSGQ…STAR) and 142 to 151 (TQEFSSTLPS). S-adenosyl-L-methionine-binding positions include Arg-185, Gly-210, Asp-237, 305–306 (DV), and Glu-343.

It belongs to the methyltransferase superfamily. LCMT family.

The enzyme catalyses [phosphatase 2A protein]-C-terminal L-leucine + S-adenosyl-L-methionine = [phosphatase 2A protein]-C-terminal L-leucine methyl ester + S-adenosyl-L-homocysteine. In terms of biological role, methylates the carboxyl group of the C-terminal leucine residue of protein phosphatase 2A catalytic subunits to form alpha-leucine ester residues. This is Leucine carboxyl methyltransferase 1 (PPM1) from Mycosarcoma maydis (Corn smut fungus).